A 293-amino-acid polypeptide reads, in one-letter code: Protease HtpX homolog (293 aa).

The next 2 helical transmembrane spans lie at 7–26 (ASLLGLLSALLIGSSYALLG) and 30–49 (GMVMGIGLAALTNLGAWYYS). His-131 lines the Zn(2+) pocket. Residue Glu-132 is part of the active site. Position 135 (His-135) interacts with Zn(2+). 2 helical membrane-spanning segments follow: residues 148 to 168 (ATLAGAIAFLAQMVSYSFWFF) and 180 to 200 (IGALLMIVLAPLSATILQLGI). Zn(2+) is bound at residue Glu-205.

Belongs to the peptidase M48B family. Requires Zn(2+) as cofactor.

It is found in the cell inner membrane. The polypeptide is Protease HtpX homolog (Acaryochloris marina (strain MBIC 11017)).